Here is a 197-residue protein sequence, read N- to C-terminus: MVERKASVERNTLETQVKCSINLDGSGKARFDIGVPFLEHMLDQIARHGLIDLDIECKGDTHIDDHHTVEDVGITLGMAFAQAIGDKKGIFRYGHAYVALDEALSRVVIDFSGRPGLQMHVPYTRASVGGFDVDLFQEFFQGFVNHALVTLHIDNLRGHNTHHQIETVFKAFGRALRMAITLDERMAGQMPSTKGCL.

The protein belongs to the imidazoleglycerol-phosphate dehydratase family.

It is found in the cytoplasm. The catalysed reaction is D-erythro-1-(imidazol-4-yl)glycerol 3-phosphate = 3-(imidazol-4-yl)-2-oxopropyl phosphate + H2O. It participates in amino-acid biosynthesis; L-histidine biosynthesis; L-histidine from 5-phospho-alpha-D-ribose 1-diphosphate: step 6/9. The chain is Imidazoleglycerol-phosphate dehydratase from Pseudomonas putida (strain GB-1).